Consider the following 463-residue polypeptide: ATP-dependent protease ATPase subunit HslU (463 aa).

ATP is bound by residues Ile19 and 61–66; that span reads GVGKTE. A disordered region spans residues 154–174; that stretch reads FGGAQNSSQTSDTQEDGEIEK. 3 residues coordinate ATP: Asp277, Glu341, and Arg413.

It belongs to the ClpX chaperone family. HslU subfamily. As to quaternary structure, a double ring-shaped homohexamer of HslV is capped on each side by a ring-shaped HslU homohexamer. The assembly of the HslU/HslV complex is dependent on binding of ATP.

It is found in the cytoplasm. In terms of biological role, ATPase subunit of a proteasome-like degradation complex; this subunit has chaperone activity. The binding of ATP and its subsequent hydrolysis by HslU are essential for unfolding of protein substrates subsequently hydrolyzed by HslV. HslU recognizes the N-terminal part of its protein substrates and unfolds these before they are guided to HslV for hydrolysis. The sequence is that of ATP-dependent protease ATPase subunit HslU from Bacillus cereus (strain G9842).